A 348-amino-acid polypeptide reads, in one-letter code: MVTASESWPQLLEQLLVGNVLSKENAAALMEAWLAEELTPVQTGAFLAAFRARDVQGSELAAMAEVLRKACALPDAKPNLGLVDTCGTGGDGADTFNISTAVAFTAAACGAHVAKHGNRSASGKVGSADVLEGLGLHLKAPLESVLGALPASGVTFLFAPAWHPALVNLAPLRRSLGVRTVFNLLGPLVNPLTPEAQVLGVAKAELLDPMAEALQQLGLTRAVVVHGAGGLDEASLEGPNEVRILENGNVRSDQLSASDFGLTLAPLEALRGGDLVTNQQILEAVLKGEAPDAHRDAVALNTALVLWAAGVQSDLSEGVKQALTSLEEGQPWHRLVSLRDALEGRKEE.

5-phospho-alpha-D-ribose 1-diphosphate contacts are provided by residues G87, 90 to 91, T95, 97 to 100, 115 to 123, and S127; these read GD, NIST, and KHGNRSASG. G87 provides a ligand contact to anthranilate. S99 is a binding site for Mg(2+). N118 contacts anthranilate. R173 is a binding site for anthranilate. Residues D232 and E233 each coordinate Mg(2+).

It belongs to the anthranilate phosphoribosyltransferase family. Homodimer. Mg(2+) serves as cofactor.

The enzyme catalyses N-(5-phospho-beta-D-ribosyl)anthranilate + diphosphate = 5-phospho-alpha-D-ribose 1-diphosphate + anthranilate. Its pathway is amino-acid biosynthesis; L-tryptophan biosynthesis; L-tryptophan from chorismate: step 2/5. In terms of biological role, catalyzes the transfer of the phosphoribosyl group of 5-phosphorylribose-1-pyrophosphate (PRPP) to anthranilate to yield N-(5'-phosphoribosyl)-anthranilate (PRA). The protein is Anthranilate phosphoribosyltransferase of Synechococcus sp. (strain CC9311).